Consider the following 441-residue polypeptide: uncharacterized protein (441 aa).

A compositionally biased stretch (low complexity) spans 121-143; sequence TLSPSIVSEQQQQQQQQQQQQQQ. Disordered regions lie at residues 121 to 146 and 371 to 392; these read TLSP…QAIS and SDAD…TAPN. A compositionally biased stretch (polar residues) spans 382–391; it reads PTSAPSTTAP.

This is an uncharacterized protein from Dictyostelium discoideum (Social amoeba).